Reading from the N-terminus, the 284-residue chain is 2-dehydro-3-deoxyphosphooctonate aldolase (284 aa).

This sequence belongs to the KdsA family.

The protein localises to the cytoplasm. It catalyses the reaction D-arabinose 5-phosphate + phosphoenolpyruvate + H2O = 3-deoxy-alpha-D-manno-2-octulosonate-8-phosphate + phosphate. It participates in carbohydrate biosynthesis; 3-deoxy-D-manno-octulosonate biosynthesis; 3-deoxy-D-manno-octulosonate from D-ribulose 5-phosphate: step 2/3. The protein operates within bacterial outer membrane biogenesis; lipopolysaccharide biosynthesis. This Paraburkholderia xenovorans (strain LB400) protein is 2-dehydro-3-deoxyphosphooctonate aldolase.